We begin with the raw amino-acid sequence, 255 residues long: uncharacterized protein (255 aa).

Residues I13, R37, D55, N81, Y148, K152, V180, and T182 each contribute to the NADP(+) site. Catalysis depends on Y148, which acts as the Proton donor. K152 acts as the Lowers pKa of active site Tyr in catalysis.

The protein belongs to the short-chain dehydrogenases/reductases (SDR) family.

In terms of biological role, involved in osmoadaptation. This is an uncharacterized protein from Emericella nidulans (strain FGSC A4 / ATCC 38163 / CBS 112.46 / NRRL 194 / M139) (Aspergillus nidulans).